Reading from the N-terminus, the 472-residue chain is Uronate isomerase (472 aa).

This sequence belongs to the metallo-dependent hydrolases superfamily. Uronate isomerase family.

The enzyme catalyses D-glucuronate = D-fructuronate. It catalyses the reaction aldehydo-D-galacturonate = keto-D-tagaturonate. It participates in carbohydrate metabolism; pentose and glucuronate interconversion. The sequence is that of Uronate isomerase from Oceanobacillus iheyensis (strain DSM 14371 / CIP 107618 / JCM 11309 / KCTC 3954 / HTE831).